A 158-amino-acid polypeptide reads, in one-letter code: uncharacterized protein (158 aa).

Transmembrane regions (helical) follow at residues 10–30 (LFFIFSGGLVFFFFEFFLNHF) and 40–60 (YITFYFIKNHPSLFLLFNFFL).

It localises to the membrane. This is an uncharacterized protein from Schizosaccharomyces pombe (strain 972 / ATCC 24843) (Fission yeast).